The following is a 519-amino-acid chain: Flavonoid 8-hydroxylase 2, chloroplastic (519 aa).

The transit peptide at Met1–Phe46 directs the protein to the chloroplast. Residues Trp77–Phe188 form the Rieske domain. 4 residues coordinate [2Fe-2S] cluster: Cys119, His121, Cys139, and His142. His241 and His246 together coordinate Fe cation. The Redox-active motif signature appears at Cys447–Cys450. The next 2 helical transmembrane spans lie at Ile462–Val478 and Tyr485–Leu501.

The cofactor is [2Fe-2S] cluster. Glandular trichome-specific expression in leaves.

It is found in the plastid. The protein resides in the chloroplast membrane. It localises to the cytoplasm. It carries out the reaction salvigenin + 2 reduced [2Fe-2S]-[ferredoxin] + O2 + 2 H(+) = 8-hydroxysalvigenin + 2 oxidized [2Fe-2S]-[ferredoxin] + H2O. The protein operates within flavonoid metabolism. Functionally, rieske-type, PAO-family oxygenase involved in the biosynthesis of polymethoxylated flavonoids natural products such as nevadensin and salvigenin, aroma compounds which contribute to the flavor of sweet basil, and exhibit pharmacological activities such as anti-allergic, anti-oxidant, antibacterial, anti-proliferative, and anti-inflammatory effects. Catalyzes the hydroxylation of salvigenin to produce 8-hydroxysalvigenin (8-OH-SALV). This chain is Flavonoid 8-hydroxylase 2, chloroplastic, found in Ocimum basilicum (Sweet basil).